Here is a 304-residue protein sequence, read N- to C-terminus: Acetyl-coenzyme A carboxylase carboxyl transferase subunit beta (304 aa).

In terms of domain architecture, CoA carboxyltransferase N-terminal spans 23 to 292 (VWTKCDSCGQ…PNPEAPREGV (270 aa)). Residues C27, C30, C46, and C49 each coordinate Zn(2+). The C4-type zinc-finger motif lies at 27 to 49 (CDSCGQVLYRAELERNLEVCPKC). The tract at residues 285–304 (PEAPREGVVVPPVPDQEPEA) is disordered. Over residues 295-304 (PPVPDQEPEA) the composition is skewed to pro residues.

The protein belongs to the AccD/PCCB family. Acetyl-CoA carboxylase is a heterohexamer composed of biotin carboxyl carrier protein (AccB), biotin carboxylase (AccC) and two subunits each of ACCase subunit alpha (AccA) and ACCase subunit beta (AccD). Zn(2+) serves as cofactor.

It localises to the cytoplasm. It carries out the reaction N(6)-carboxybiotinyl-L-lysyl-[protein] + acetyl-CoA = N(6)-biotinyl-L-lysyl-[protein] + malonyl-CoA. It participates in lipid metabolism; malonyl-CoA biosynthesis; malonyl-CoA from acetyl-CoA: step 1/1. Functionally, component of the acetyl coenzyme A carboxylase (ACC) complex. Biotin carboxylase (BC) catalyzes the carboxylation of biotin on its carrier protein (BCCP) and then the CO(2) group is transferred by the transcarboxylase to acetyl-CoA to form malonyl-CoA. This chain is Acetyl-coenzyme A carboxylase carboxyl transferase subunit beta, found in Escherichia coli O6:H1 (strain CFT073 / ATCC 700928 / UPEC).